The primary structure comprises 23 residues: Testis ecdysiotropin peptide B (23 aa).

Functionally, stimulates synthesis of ecdysteroid in the testes of larvae and pupae. In Lymantria dispar (Gypsy moth), this protein is Testis ecdysiotropin peptide B.